Reading from the N-terminus, the 508-residue chain is MEELQRYLKMDRSRERDFLYPLLFQEYIYALAHDFGLTKLIPYESMQILSYDKKYSSLIVKRLIIRMYQQKHLIILDNDSNQKKFLEHNKNLYSQMLSEGFAVIVEIPFALRLVSSYQGKKMEKSINLGSIHSTFPFLEDKFVHLNHVLNIIIPYPIHLELLVQNLRCWIQDASFLHLLRFFLYEYHNWNSLTTQKTNQNLFFFKENRRFFWFLFNFHVYESESIFLFLRKKSYHLRSTSSIAFLDRTHFYGKIEHFQVVFRNDFHTILWLFKDPFMHYFRYQGKSIMSSKGTPLLMKKWKNYLVNLWEYHFHFWSQPDRLHINQLSNHFLDFLGYLSSVRPNPSVVRNQMLENAFIIDIAINKLDTIVPIIPLIGSLAKANFCNLSGQPVSKPAWTDSPDSDIIDRFGRICRNVSHYYSGSSKKKTLYRIKYILRLSCARTLARNTKSTVRSFLKRLGSEFLEQFLIEEEQVLSFILPKRSSSSQRLSKERVWYFDIIRINDLMDLS.

Belongs to the intron maturase 2 family. MatK subfamily.

It localises to the plastid. It is found in the chloroplast. Usually encoded in the trnK tRNA gene intron. Probably assists in splicing its own and other chloroplast group II introns. The protein is Maturase K of Ranunculus trichophyllus (Whitewater crowfoot).